We begin with the raw amino-acid sequence, 332 residues long: 1-acyl-sn-glycerol-3-phosphate acyltransferase CHLREDRAFT_174358 (332 aa).

The chain crosses the membrane as a helical span at residues 96 to 116 (FLLSLPLFVTMMVMAPLVLAF). The HXXXXD motif motif lies at 163-168 (HQSFLD). The helical transmembrane segment at 185–205 (TSNFLIPIIGWSMFLTGHVMI) threads the bilayer. The short motif at 235–238 (EGTR) is the EGTR motif element.

Belongs to the 1-acyl-sn-glycerol-3-phosphate acyltransferase family.

The protein resides in the membrane. The catalysed reaction is a 1-acyl-sn-glycero-3-phosphate + an acyl-CoA = a 1,2-diacyl-sn-glycero-3-phosphate + CoA. It participates in phospholipid metabolism; CDP-diacylglycerol biosynthesis; CDP-diacylglycerol from sn-glycerol 3-phosphate: step 2/3. Its function is as follows. Converts lysophosphatidic acid (LPA) into phosphatidic acid by incorporating an acyl moiety at the sn-2 position of the glycerol backbone. The chain is 1-acyl-sn-glycerol-3-phosphate acyltransferase CHLREDRAFT_174358 from Chlamydomonas reinhardtii (Chlamydomonas smithii).